The primary structure comprises 231 residues: 7-cyano-7-deazaguanine synthase (231 aa).

F8–L18 is an ATP binding site. C188, C197, C200, and C203 together coordinate Zn(2+).

It belongs to the QueC family. Zn(2+) is required as a cofactor.

It catalyses the reaction 7-carboxy-7-deazaguanine + NH4(+) + ATP = 7-cyano-7-deazaguanine + ADP + phosphate + H2O + H(+). It functions in the pathway purine metabolism; 7-cyano-7-deazaguanine biosynthesis. Functionally, catalyzes the ATP-dependent conversion of 7-carboxy-7-deazaguanine (CDG) to 7-cyano-7-deazaguanine (preQ(0)). The chain is 7-cyano-7-deazaguanine synthase from Escherichia coli O1:K1 / APEC.